A 160-amino-acid chain; its full sequence is Transcription elongation factor GreA (160 aa).

Positions 43-75 (LSENAEYEAAREQQAQMESKIVDLENKLTRASI) form a coiled coil.

The protein belongs to the GreA/GreB family.

Necessary for efficient RNA polymerase transcription elongation past template-encoded arresting sites. The arresting sites in DNA have the property of trapping a certain fraction of elongating RNA polymerases that pass through, resulting in locked ternary complexes. Cleavage of the nascent transcript by cleavage factors such as GreA or GreB allows the resumption of elongation from the new 3'terminus. GreA releases sequences of 2 to 3 nucleotides. The protein is Transcription elongation factor GreA of Prosthecochloris aestuarii (strain DSM 271 / SK 413).